The following is a 650-amino-acid chain: Chaperone protein DnaK (650 aa).

A Phosphothreonine; by autocatalysis modification is found at Thr200. A compositionally biased stretch (low complexity) spans 612-636 (QQAGAAGAAGAAEGAAHAGGAQQAA). Residues 612-650 (QQAGAAGAAGAAEGAAHAGGAQQAADDVVDAEFKEVKKD) are disordered.

Belongs to the heat shock protein 70 family.

Acts as a chaperone. In Burkholderia ambifaria (strain ATCC BAA-244 / DSM 16087 / CCUG 44356 / LMG 19182 / AMMD) (Burkholderia cepacia (strain AMMD)), this protein is Chaperone protein DnaK.